The following is a 195-amino-acid chain: Thioredoxin reductase-like selenoprotein T (195 aa).

Residues 1–19 form the signal peptide; it reads MRLLLLLLVAASAVVRSEA. The segment at residues 46–49 is a cross-link (cysteinyl-selenocysteine (Cys-Sec)); that stretch reads CVSU. Position 49 (Sec49) is a non-standard amino acid, selenocysteine. A helical membrane pass occupies residues 85–103; the sequence is IASFLSVFKLVLIGLIIVG.

It belongs to the SelWTH family. Selenoprotein T subfamily. May contain a selenide-sulfide bond between Cys-46 and Sec-49. This bond is speculated to serve as redox-active pair. Ubiquitous. Highly expressed in the endocrine pancreas. Expressed at low levels in the adult brain.

It is found in the endoplasmic reticulum membrane. The catalysed reaction is [thioredoxin]-dithiol + NADP(+) = [thioredoxin]-disulfide + NADPH + H(+). Its function is as follows. Selenoprotein with thioredoxin reductase-like oxidoreductase activity. Protects dopaminergic neurons against oxidative stress and cell death. Involved in ADCYAP1/PACAP-induced calcium mobilization and neuroendocrine secretion. Plays a role in fibroblast anchorage and redox regulation. In gastric smooth muscle, modulates the contraction processes through the regulation of calcium release and MYLK activation. In pancreatic islets, involved in the control of glucose homeostasis, contributes to prolonged ADCYAP1/PACAP-induced insulin secretion. In Mus musculus (Mouse), this protein is Thioredoxin reductase-like selenoprotein T.